The chain runs to 719 residues: ATP-dependent RNA helicase p62 (719 aa).

The interval 94-234 (AQSQRAFRDS…GSQDLPMRPV (141 aa)) is disordered. Composition is skewed to basic and acidic residues over residues 99 to 108 (AFRDSSKPDS) and 137 to 171 (EEIK…DRRG). The segment covering 172-188 (GGGGGNRFGGGGGGGDY) has biased composition (gly residues). The span at 194–205 (GRVEKRRDDRGG) shows a compositional bias: basic and acidic residues. Residues 206 to 226 (GNRFGGGGGFGDRRGGGGGGS) are compositionally biased toward gly residues. The Q motif signature appears at 281 to 309 (QDFSEVHLPDYVMKEIRRQGYKAPTAIQA). Positions 312–487 (WPIAMSGSNF…EDFLGNYIQI (176 aa)) constitute a Helicase ATP-binding domain. Position 325-332 (325-332 (AKTGSGKT)) interacts with ATP. A DEAD box motif is present at residues 435 to 438 (DEAD). The Helicase C-terminal domain occupies 519–664 (LLSDIYDTSE…EINPALENLA (146 aa)). The interval 689–719 (GGGFKKGSLSNGRGFGGGGGGGGEGRHSRFD) is disordered. Residues 701–711 (RGFGGGGGGGG) are compositionally biased toward gly residues.

This sequence belongs to the DEAD box helicase family. DDX5/DBP2 subfamily. As to quaternary structure, interacts with Fmr1 to form the RNA-induced silencing complex (RISC), a ribonucleoprotein (RNP) complex involved in translation regulation, other components of the complex are RpL5, RpL11, AGO2 and Dcr-1.

Its subcellular location is the nucleus. The protein localises to the nucleolus. The protein resides in the cytoplasm. It localises to the cytosol. It catalyses the reaction ATP + H2O = ADP + phosphate + H(+). As an RNA helicase, unwinds RNA and alters RNA structures through ATP binding and hydrolysis. Involved in multiple cellular processes, including pre-mRNA splicing, alternative splicing, rRNA processing and miRNA processing, as well as transcription regulation. Plays a role in innate immunity. Specifically restricts bunyavirus infection, including Rift Valley fever virus (RVFV) or La Crosse virus (LACV), but not vesicular stomatitis virus (VSV), in an interferon- and DROSHA-independent manner. This chain is ATP-dependent RNA helicase p62 (Rm62), found in Drosophila melanogaster (Fruit fly).